Consider the following 137-residue polypeptide: Large ribosomal subunit protein uL24 (137 aa).

The protein belongs to the universal ribosomal protein uL24 family. As to quaternary structure, part of the 50S ribosomal subunit.

Functionally, one of two assembly initiator proteins, it binds directly to the 5'-end of the 23S rRNA, where it nucleates assembly of the 50S subunit. In terms of biological role, located at the polypeptide exit tunnel on the outside of the subunit. This is Large ribosomal subunit protein uL24 from Sulfurisphaera tokodaii (strain DSM 16993 / JCM 10545 / NBRC 100140 / 7) (Sulfolobus tokodaii).